A 308-amino-acid polypeptide reads, in one-letter code: MSTTTTESANPSLAAQEKIEVDFTPKEHYGDWRDEFHREGCIIIRNAVSPERAQYYVDKQIEWLKNFELGFDEKDESTWTAEHLPVSFRGGKYYYGVAHEKSVWEARTEPGVMDAFAKLWETDELLCSFDGIKIDLPRRKDVKWTPWPHCDHNPDVKGLSCVQGMLNFAPNGPNDGGLIWMKGSAKVFNEFFAEQRKNEDAENFDHKHQEFFKFHEDHMKWFEDRGYAFTKLELGPGDLVLWDSRTVHHSCFAAGDQIRHAQYICMMPKRFATEKALETKKYCFEHYLPNTHLPHRWVTQIVHHCEES.

The protein operates within secondary metabolite biosynthesis. Part of the cluster that mediates the biosynthesis of a highly modified cyclo-arginine-tryptophan dipeptide (cRW). The first step of the pathway is perfornmed by the arginine-containing cyclodipeptide synthase (RCPDS) avaA that acts as the scaffold-generating enzyme and is responsible for formation of the cyclo-Arg-Trp (cRW) diketopiperazine. AvaB then acts as a multifunctional flavoenzyme that is responsible for generating the cyclo-Arg-formylkynurenine DKP, which can be deformylated by avaC. AvaB then further catalyzes an additional N-oxidation followed by cyclization and dehydration. The next step is an N-acetylation of the guanidine group catalyzed by the arginine N-acetyltransferase avaD. The roles of the additional enzymes identified within the ava cluster still have to be determined. This Aspergillus versicolor protein is Ava biosynthesis cluster protein O.